The primary structure comprises 111 residues: Large ribosomal subunit protein uL22 (111 aa).

Belongs to the universal ribosomal protein uL22 family. Part of the 50S ribosomal subunit.

Its function is as follows. This protein binds specifically to 23S rRNA; its binding is stimulated by other ribosomal proteins, e.g. L4, L17, and L20. It is important during the early stages of 50S assembly. It makes multiple contacts with different domains of the 23S rRNA in the assembled 50S subunit and ribosome. In terms of biological role, the globular domain of the protein is located near the polypeptide exit tunnel on the outside of the subunit, while an extended beta-hairpin is found that lines the wall of the exit tunnel in the center of the 70S ribosome. The protein is Large ribosomal subunit protein uL22 of Protochlamydia amoebophila (strain UWE25).